Reading from the N-terminus, the 448-residue chain is D-inositol 3-phosphate glycosyltransferase (448 aa).

1D-myo-inositol 3-phosphate contacts are provided by residues His35, 46–51 (DAGGLN), Lys104, Tyr137, Thr161, and Arg181. UDP-N-acetyl-alpha-D-glucosamine is bound at residue Gly49. UDP-N-acetyl-alpha-D-glucosamine is bound by residues Arg255, Lys260, and Met321. Residues Tyr330, Arg331, and Ala333 each coordinate Mg(2+). UDP-N-acetyl-alpha-D-glucosamine is bound by residues Glu343 and Glu351. Residue Thr357 coordinates Mg(2+).

The protein belongs to the glycosyltransferase group 1 family. MshA subfamily. As to quaternary structure, homodimer.

It carries out the reaction 1D-myo-inositol 3-phosphate + UDP-N-acetyl-alpha-D-glucosamine = 1D-myo-inositol 2-acetamido-2-deoxy-alpha-D-glucopyranoside 3-phosphate + UDP + H(+). Its function is as follows. Catalyzes the transfer of a N-acetyl-glucosamine moiety to 1D-myo-inositol 3-phosphate to produce 1D-myo-inositol 2-acetamido-2-deoxy-glucopyranoside 3-phosphate in the mycothiol biosynthesis pathway. In Acidothermus cellulolyticus (strain ATCC 43068 / DSM 8971 / 11B), this protein is D-inositol 3-phosphate glycosyltransferase.